The chain runs to 94 residues: MRTLAILAAILLVALQAQAEPLQARADEVAAAPEQIPADNPEVVVSLAWDESLAPKHPGSRKNVACYCRIPACLAGERRYGTCIYQGRLWAFCC.

Residues 1-19 (MRTLAILAAILLVALQAQA) form the signal peptide. Positions 20-64 (EPLQARADEVAAAPEQIPADNPEVVVSLAWDESLAPKHPGSRKNV) are excised as a propeptide. 3 cysteine pairs are disulfide-bonded: cysteine 66-cysteine 94, cysteine 68-cysteine 83, and cysteine 73-cysteine 93. Position 78 is an ADP-ribosylarginine; by ART1 (arginine 78). A Phosphotyrosine modification is found at tyrosine 85. An ADP-ribosylarginine; by ART1 modification is found at arginine 88.

Belongs to the alpha-defensin family. Tetramer. Dimer. Interacts with RETN. ADP-ribosylation drastically reduces cytotoxic and antibacterial activities, and enhances IL8 production.

It localises to the secreted. Functionally, effector molecule of the innate immune system that acts via antibiotic-like properties against a broad array of infectious agents including bacteria, fungi, and viruses or by promoting the activation and maturation of some APCs. Interacts with the essential precursor of cell wall synthesis lipid II to inhibit bacterial cell wall synthesis. Inhibits adenovirus infection via inhibition of viral disassembly at the vertex region, thereby restricting the release of internal capsid protein pVI, which is required for endosomal membrane penetration during cell entry. In addition, interaction with adenovirus capsid leads to the redirection of viral particles to TLR4 thereby promoting a NLRP3-mediated inflammasome response and interleukin 1-beta (IL-1beta) release. Induces the production of proinflammatory cytokines including type I interferon (IFN) in plasmacytoid dendritic cells (pDCs) by triggering the degradation of NFKBIA and nuclear translocation of IRF1, both of which are required for activation of pDCs. This is Neutrophil defensin 1 (DEFA1) from Pan troglodytes (Chimpanzee).